The primary structure comprises 533 residues: Death domain-containing ATP nucleosidase (533 aa).

A death domain region spans residues 1–262 (MDAAAIISLL…TAAGKEEKVS (262 aa)). The segment at 184–248 (STFVSDDATQ…TQTSTNSFNS (65 aa)) is disordered. The segment covering 218–227 (PSAQVNQPPT) has biased composition (polar residues). Over residues 236-248 (SGSTQTSTNSFNS) the composition is skewed to low complexity. The segment at 263-533 (DDVTKGIKFL…HLDDDRTIHM (271 aa)) is purine nucleoside phosphorylase domain.

It carries out the reaction ATP + H2O = D-ribose 5-triphosphate + adenine. The enzyme catalyses dATP + H2O = 2-deoxyribose 5-triphosphate + adenine. Functionally, the C-terminal purine nucleoside phosphorylase (PNP) domain cleaves the N-glycosidic bond of ATP, and to a lesser extent dATP, to release adenine and a sugar triphosphate; has weak activity on ADP and AMP and no activity on dADP, dAMP, adenosine, deoxyadenosine or other (d)NTPs. This is Death domain-containing ATP nucleosidase (109585858) from Amphimedon queenslandica (Sponge).